The primary structure comprises 235 residues: Interleukin-34 (235 aa).

Residues 1–20 form the signal peptide; the sequence is MPWGLAWLYCLGILLDVALG. Asn-100 carries an N-linked (GlcNAc...) asparagine glycan.

This sequence belongs to the IL-34 family. In terms of assembly, homodimer. Interacts with CSF1R.

It is found in the secreted. Its function is as follows. Cytokine that promotes the proliferation, survival and differentiation of monocytes and macrophages. Promotes the release of pro-inflammatory chemokines, and thereby plays an important role in innate immunity and in inflammatory processes. Plays an important role in the regulation of osteoclast proliferation and differentiation, and in the regulation of bone resorption. Signaling via CSF1R and its downstream effectors stimulates phosphorylation of MAPK1/ERK2 AND MAPK3/ERK1. The sequence is that of Interleukin-34 (Il34) from Mus musculus (Mouse).